The sequence spans 780 residues: E3 UFM1-protein ligase 1 homolog (780 aa).

Polar residues predominate over residues 403–413 (STSSTNPNHST). Disordered stretches follow at residues 403-458 (STSS…RSHI) and 734-760 (SSDK…NIDL). 2 stretches are compositionally biased toward basic and acidic residues: residues 443–458 (KDRS…RSHI) and 736–750 (DKQK…KDSD).

The protein belongs to the UFL1 family.

Its function is as follows. E3 UFM1-protein ligase that mediates ufmylation of target proteins. This is E3 UFM1-protein ligase 1 homolog from Trichoplax adhaerens (Trichoplax reptans).